The sequence spans 855 residues: Sucrose synthase 7 (855 aa).

The GT-B glycosyltransferase stretch occupies residues Ser279–Thr758.

It belongs to the glycosyltransferase 1 family. Plant sucrose synthase subfamily. Predominantly expressed in roots, flowers and immature seeds.

The protein localises to the cytoplasm. It is found in the membrane. The catalysed reaction is an NDP-alpha-D-glucose + D-fructose = a ribonucleoside 5'-diphosphate + sucrose + H(+). Functionally, sucrose-cleaving enzyme that provides UDP-glucose and fructose for various metabolic pathways. The protein is Sucrose synthase 7 (SUS7) of Oryza sativa subsp. japonica (Rice).